An 80-amino-acid polypeptide reads, in one-letter code: ATP synthase F(1) complex subunit delta, mitochondrial (80 aa).

The N-terminal 22 residues, 1-22, are a transit peptide targeting the mitochondrion; the sequence is MLPATLLRXSGLGRVVRQARAY.

This sequence belongs to the ATPase epsilon chain family. In terms of assembly, component of the ATP synthase complex composed at least of ATP5F1A/subunit alpha, ATP5F1B/subunit beta, ATP5MC1/subunit c (homooctomer), MT-ATP6/subunit a, MT-ATP8/subunit 8, ATP5ME/subunit e, ATP5MF/subunit f, ATP5MG/subunit g, ATP5MK/subunit k, ATP5MJ/subunit j, ATP5F1C/subunit gamma, ATP5F1D/subunit delta, ATP5F1E/subunit epsilon, ATP5PF/subunit F6, ATP5PB/subunit b, ATP5PD/subunit d, ATP5PO/subunit OSCP. ATP synthase complex consists of a soluble F(1) head domain (subunits alpha(3) and beta(3)) - the catalytic core - and a membrane F(0) domain - the membrane proton channel (subunits c, a, 8, e, f, g, k and j). These two domains are linked by a central stalk (subunits gamma, delta, and epsilon) rotating inside the F1 region and a stationary peripheral stalk (subunits F6, b, d, and OSCP). Component of a complex composed at least by ATPIF1, ATP5F1A, ATP5F1B, ATP5F1C AND ATP5F1E.

The protein resides in the mitochondrion. It is found in the mitochondrion inner membrane. Functionally, subunit delta, of the mitochondrial membrane ATP synthase complex (F(1)F(0) ATP synthase or Complex V) that produces ATP from ADP in the presence of a proton gradient across the membrane which is generated by electron transport complexes of the respiratory chain. ATP synthase complex consist of a soluble F(1) head domain - the catalytic core - and a membrane F(1) domain - the membrane proton channel. These two domains are linked by a central stalk rotating inside the F(1) region and a stationary peripheral stalk. During catalysis, ATP synthesis in the catalytic domain of F(1) is coupled via a rotary mechanism of the central stalk subunits to proton translocation. In vivo, can only synthesize ATP although its ATP hydrolase activity can be activated artificially in vitro. With the central stalk subunit gamma, is essential for the biogenesis of F(1) catalytic part of the ATP synthase complex namely in the formation of F1 assembly intermediate. The chain is ATP synthase F(1) complex subunit delta, mitochondrial from Sus scrofa (Pig).